The sequence spans 189 residues: dCTP deaminase (189 aa).

DCTP-binding positions include 112 to 117 (KSTYAR), 136 to 138 (TLE), Q157, Y171, and Q181. The Proton donor/acceptor role is filled by E138.

Belongs to the dCTP deaminase family. In terms of assembly, homotrimer.

The enzyme catalyses dCTP + H2O + H(+) = dUTP + NH4(+). Its pathway is pyrimidine metabolism; dUMP biosynthesis; dUMP from dCTP (dUTP route): step 1/2. Functionally, catalyzes the deamination of dCTP to dUTP. In Albidiferax ferrireducens (strain ATCC BAA-621 / DSM 15236 / T118) (Rhodoferax ferrireducens), this protein is dCTP deaminase.